A 100-amino-acid polypeptide reads, in one-letter code: Aspartyl/glutamyl-tRNA(Asn/Gln) amidotransferase subunit C (100 aa).

The protein belongs to the GatC family. In terms of assembly, heterotrimer of A, B and C subunits.

It catalyses the reaction L-glutamyl-tRNA(Gln) + L-glutamine + ATP + H2O = L-glutaminyl-tRNA(Gln) + L-glutamate + ADP + phosphate + H(+). The catalysed reaction is L-aspartyl-tRNA(Asn) + L-glutamine + ATP + H2O = L-asparaginyl-tRNA(Asn) + L-glutamate + ADP + phosphate + 2 H(+). Functionally, allows the formation of correctly charged Asn-tRNA(Asn) or Gln-tRNA(Gln) through the transamidation of misacylated Asp-tRNA(Asn) or Glu-tRNA(Gln) in organisms which lack either or both of asparaginyl-tRNA or glutaminyl-tRNA synthetases. The reaction takes place in the presence of glutamine and ATP through an activated phospho-Asp-tRNA(Asn) or phospho-Glu-tRNA(Gln). This chain is Aspartyl/glutamyl-tRNA(Asn/Gln) amidotransferase subunit C, found in Janthinobacterium sp. (strain Marseille) (Minibacterium massiliensis).